Reading from the N-terminus, the 138-residue chain is Large ribosomal subunit protein uL16 (138 aa).

The protein belongs to the universal ribosomal protein uL16 family. In terms of assembly, part of the 50S ribosomal subunit.

In terms of biological role, binds 23S rRNA and is also seen to make contacts with the A and possibly P site tRNAs. The chain is Large ribosomal subunit protein uL16 from Acidiphilium cryptum (strain JF-5).